The chain runs to 182 residues: A-type ATP synthase subunit E (182 aa).

This sequence belongs to the V-ATPase E subunit family. Has multiple subunits with at least A(3), B(3), C, D, E, F, H, I and proteolipid K(x).

Its subcellular location is the cell membrane. In terms of biological role, component of the A-type ATP synthase that produces ATP from ADP in the presence of a proton gradient across the membrane. The chain is A-type ATP synthase subunit E from Methanothrix thermoacetophila (strain DSM 6194 / JCM 14653 / NBRC 101360 / PT) (Methanosaeta thermophila).